The chain runs to 278 residues: S-adenosylmethionine decarboxylase proenzyme (278 aa).

Residues 96-115 (LTPESLTGESPGPLPGNKPS) form a disordered region. S126 serves as the catalytic Schiff-base intermediate with substrate; via pyruvic acid. At S126 the chain carries Pyruvic acid (Ser); by autocatalysis. The active-site Proton acceptor; for processing activity is H131. C154 acts as the Proton donor; for catalytic activity in catalysis.

The protein belongs to the prokaryotic AdoMetDC family. Type 2 subfamily. As to quaternary structure, heterooctamer of four alpha and four beta chains arranged as a tetramer of alpha/beta heterodimers. The cofactor is pyruvate. Is synthesized initially as an inactive proenzyme. Formation of the active enzyme involves a self-maturation process in which the active site pyruvoyl group is generated from an internal serine residue via an autocatalytic post-translational modification. Two non-identical subunits are generated from the proenzyme in this reaction, and the pyruvate is formed at the N-terminus of the alpha chain, which is derived from the carboxyl end of the proenzyme. The post-translation cleavage follows an unusual pathway, termed non-hydrolytic serinolysis, in which the side chain hydroxyl group of the serine supplies its oxygen atom to form the C-terminus of the beta chain, while the remainder of the serine residue undergoes an oxidative deamination to produce ammonia and the pyruvoyl group blocking the N-terminus of the alpha chain.

The catalysed reaction is S-adenosyl-L-methionine + H(+) = S-adenosyl 3-(methylsulfanyl)propylamine + CO2. The protein operates within amine and polyamine biosynthesis; S-adenosylmethioninamine biosynthesis; S-adenosylmethioninamine from S-adenosyl-L-methionine: step 1/1. Its function is as follows. Catalyzes the decarboxylation of S-adenosylmethionine to S-adenosylmethioninamine (dcAdoMet), the propylamine donor required for the synthesis of the polyamines spermine and spermidine from the diamine putrescine. The polypeptide is S-adenosylmethionine decarboxylase proenzyme (Alkaliphilus metalliredigens (strain QYMF)).